Consider the following 1253-residue polypeptide: Cytoplasmic FMR1-interacting protein 2 (1253 aa).

This sequence belongs to the CYFIP family.

Its subcellular location is the cytoplasm. In terms of biological role, involved in T-cell adhesion and p53-dependent induction of apoptosis. Does not bind RNA. The sequence is that of Cytoplasmic FMR1-interacting protein 2 (cyfip2) from Xenopus laevis (African clawed frog).